We begin with the raw amino-acid sequence, 290 residues long: Undecaprenyl-diphosphatase (290 aa).

8 helical membrane-spanning segments follow: residues 5–25 (IGIFEAIVLGFVQGITEYFPI), 44–64 (GTAYSAVIQLGSLLAVLTYFY), 88–108 (VRLFWGIILGTIPIVIAGLAL), 122–142 (LSVIAVASIVMAALLWLSESL), 152–172 (IRVIDGILIGCAQALALVPGV), 195–215 (FSFLLAIPAIFLSGLLELKVL), 226–246 (PIVAGFVSSTVFSYLAIAWLL), and 255–275 (LVFVIYRFFFGALLLGLLAAG).

This sequence belongs to the UppP family.

The protein resides in the cell inner membrane. It catalyses the reaction di-trans,octa-cis-undecaprenyl diphosphate + H2O = di-trans,octa-cis-undecaprenyl phosphate + phosphate + H(+). Catalyzes the dephosphorylation of undecaprenyl diphosphate (UPP). Confers resistance to bacitracin. The protein is Undecaprenyl-diphosphatase of Gloeobacter violaceus (strain ATCC 29082 / PCC 7421).